Consider the following 520-residue polypeptide: Peptide chain release factor 3 (520 aa).

The tr-type G domain maps to 8-273; the sequence is EIRKTFAIIS…AYVDHAPMPS (266 aa). GTP-binding positions include 17–24, 85–89, and 139–142; these read SHPDAGKT, DTPGH, and NKLD.

Belongs to the TRAFAC class translation factor GTPase superfamily. Classic translation factor GTPase family. PrfC subfamily.

Its subcellular location is the cytoplasm. Its function is as follows. Increases the formation of ribosomal termination complexes and stimulates activities of RF-1 and RF-2. It binds guanine nucleotides and has strong preference for UGA stop codons. It may interact directly with the ribosome. The stimulation of RF-1 and RF-2 is significantly reduced by GTP and GDP, but not by GMP. In Macrococcus caseolyticus (strain JCSC5402) (Macrococcoides caseolyticum), this protein is Peptide chain release factor 3.